A 199-amino-acid chain; its full sequence is Sulfocyanin (199 aa).

Residues 7 to 27 form a helical; Signal-anchor for type II membrane protein membrane-spanning segment; the sequence is VLPVVVGILVVIIAVAVGVYV. The region spanning 79 to 188 is the Plastocyanin-like domain; it reads NFNGTSSGSL…SGMWAVLVAS (110 aa). His110, Cys171, His176, and Met181 together coordinate Cu cation.

Belongs to the multicopper oxidase family.

Its subcellular location is the cell membrane. Its function is as follows. The 4 redox proteins SoxE, SoxF, SoxG and SoxH probably form part of a membrane respiratory complex together with SoxM, a catalytic subunit of cytochrome oxidase. In Sulfolobus acidocaldarius (strain ATCC 33909 / DSM 639 / JCM 8929 / NBRC 15157 / NCIMB 11770), this protein is Sulfocyanin (soxE).